The chain runs to 193 residues: Small ribosomal subunit protein eS7 (193 aa).

It belongs to the eukaryotic ribosomal protein eS7 family.

In Dictyostelium discoideum (Social amoeba), this protein is Small ribosomal subunit protein eS7 (rps7).